The following is a 1068-amino-acid chain: Phosphatidylinositol 4,5-bisphosphate 3-kinase catalytic subunit alpha isoform (1068 aa).

The region spanning 16–105 is the PI3K-ABD domain; sequence MPPRILVECL…QPFLKVIEPV (90 aa). The region spanning 187–289 is the PI3K-RBD domain; that stretch reads KGQIIVVIWV…GRMPNLMLMA (103 aa). One can recognise a C2 PI3K-type domain in the interval 330-487; the sequence is INSALRIKIL…DWFSSVVKFP (158 aa). The PIK helical domain maps to 517–694; sequence LARDNELREN…GLLLESYCRA (178 aa). Positions 765–1051 constitute a PI3K/PI4K catalytic domain; that stretch reads RLEECRIMSS…QMNDAHHGGW (287 aa). Residues 771 to 777 form a G-loop region; the sequence is IMSSAKR. Residues 912 to 920 form a catalytic loop region; that stretch reads GIGDRHNSN. The segment at 931–957 is activation loop; that stretch reads HIDFGHFLDHKKKKFGYKRERVPFVLT.

The protein belongs to the PI3/PI4-kinase family. Heterodimer of a catalytic subunit PIK3CA and a p85 regulatory subunit (PIK3R1, PIK3R2 or PIK3R3). Interacts with IRS1 in nuclear extracts. Interacts with RUFY3. Interacts with RASD2. Interacts with APPL1. Interacts with HRAS and KRAS. Interaction with HRAS/KRAS is required for PI3K pathway signaling and cell proliferation stimulated by EGF and FGF2. Interacts with FAM83B; activates the PI3K/AKT signaling cascade.

The catalysed reaction is L-seryl-[protein] + ATP = O-phospho-L-seryl-[protein] + ADP + H(+). It catalyses the reaction a 1,2-diacyl-sn-glycero-3-phospho-(1D-myo-inositol) + ATP = a 1,2-diacyl-sn-glycero-3-phospho-(1D-myo-inositol-3-phosphate) + ADP + H(+). It carries out the reaction a 1,2-diacyl-sn-glycero-3-phospho-(1D-myo-inositol-4,5-bisphosphate) + ATP = a 1,2-diacyl-sn-glycero-3-phospho-(1D-myo-inositol-3,4,5-trisphosphate) + ADP + H(+). The enzyme catalyses 1,2-dioctanoyl-sn-glycero-3-phospho-(1D-myo-inositol-4,5-bisphosphate) + ATP = 1,2-dioctanoyl-sn-glycero-3-phospho-(1D-myo-inositol-3,4,5-trisphosphate) + ADP + H(+). The catalysed reaction is 1-octadecanoyl-2-(5Z,8Z,11Z,14Z)-eicosatetraenoyl-sn-glycero-3-phospho-1D-myo-inositol 4,5-bisphosphate + ATP = 1-octadecanoyl-2-(5Z,8Z,11Z,14Z-eicosatetraenoyl)-sn-glycero-3-phospho-(1D-myo-inositol 3,4,5-triphosphate) + ADP + H(+). The protein operates within phospholipid metabolism; phosphatidylinositol phosphate biosynthesis. Its function is as follows. Phosphoinositide-3-kinase (PI3K) phosphorylates phosphatidylinositol (PI) and its phosphorylated derivatives at position 3 of the inositol ring to produce 3-phosphoinositides. Uses ATP and PtdIns(4,5)P2 (phosphatidylinositol 4,5-bisphosphate) to generate phosphatidylinositol 3,4,5-trisphosphate (PIP3). PIP3 plays a key role by recruiting PH domain-containing proteins to the membrane, including AKT1 and PDPK1, activating signaling cascades involved in cell growth, survival, proliferation, motility and morphology. Participates in cellular signaling in response to various growth factors. Involved in the activation of AKT1 upon stimulation by receptor tyrosine kinases ligands such as EGF, insulin, IGF1, VEGFA and PDGF. Involved in signaling via insulin-receptor substrate (IRS) proteins. Essential in endothelial cell migration during vascular development through VEGFA signaling, possibly by regulating RhoA activity. Required for lymphatic vasculature development, possibly by binding to RAS and by activation by EGF and FGF2, but not by PDGF. Regulates invadopodia formation through the PDPK1-AKT1 pathway. Participates in cardiomyogenesis in embryonic stem cells through a AKT1 pathway. Participates in vasculogenesis in embryonic stem cells through PDK1 and protein kinase C pathway. In addition to its lipid kinase activity, it displays a serine-protein kinase activity that results in the autophosphorylation of the p85alpha regulatory subunit as well as phosphorylation of other proteins such as 4EBP1, H-Ras, the IL-3 beta c receptor and possibly others. Plays a role in the positive regulation of phagocytosis and pinocytosis. In Bos taurus (Bovine), this protein is Phosphatidylinositol 4,5-bisphosphate 3-kinase catalytic subunit alpha isoform (PIK3CA).